Here is a 436-residue protein sequence, read N- to C-terminus: Trigger factor (436 aa).

In terms of domain architecture, PPIase FKBP-type spans 161 to 248 (TDRVTIDLYG…LKKVEQYRLP (88 aa)).

Belongs to the FKBP-type PPIase family. Tig subfamily.

The protein localises to the cytoplasm. It carries out the reaction [protein]-peptidylproline (omega=180) = [protein]-peptidylproline (omega=0). Its function is as follows. Involved in protein export. Acts as a chaperone by maintaining the newly synthesized protein in an open conformation. Functions as a peptidyl-prolyl cis-trans isomerase. The protein is Trigger factor of Baumannia cicadellinicola subsp. Homalodisca coagulata.